Reading from the N-terminus, the 149-residue chain is Ribonuclease HI (149 aa).

The region spanning 1–140 (MIIGYFDGLC…AYELVRRGKL (140 aa)) is the RNase H type-1 domain. Positions 7, 52, 76, and 125 each coordinate Mg(2+). Residues aspartate 7, glutamate 52, aspartate 76, and aspartate 125 each coordinate Mn(2+). A disulfide bridge connects residues cysteine 58 and cysteine 145.

Monomer. The cofactor is Mn(2+). Mg(2+) serves as cofactor. It depends on Co(2+) as a cofactor. Ni(2+) is required as a cofactor. Post-translationally, the disulfide bond confers considerable stability to the protein.

It is found in the cytoplasm. It carries out the reaction Endonucleolytic cleavage to 5'-phosphomonoester.. In terms of biological role, nuclease that specifically degrades the RNA of RNA-DNA hybrids. Endonucleolytically removes RNA primers from the Okazaki fragments of lagging strand synthesis on its own. In the presence of Mn(2+) or Co(2+) can also cleave an RNA-RNA hybrid; the dsRNase activity is 10- 100-fold lower than RNase H activity. Complements the temperature-sensitive phenotype of an E.coli double rnhA/rnhB (RNase H) disruption mutant. In Sulfurisphaera tokodaii (strain DSM 16993 / JCM 10545 / NBRC 100140 / 7) (Sulfolobus tokodaii), this protein is Ribonuclease HI (rnhA).